A 1016-amino-acid polypeptide reads, in one-letter code: Nonsense-mediated mRNA decay factor SMG5 (1016 aa).

S2 is modified (N-acetylserine). Phosphoserine is present on residues S2 and S423. 2 disordered regions span residues 408–561 and 594–637; these read NPVP…PSEA and PTTN…RSCR. Residues 449–466 are compositionally biased toward basic residues; the sequence is KSRKFSRLSCLRRRRHPP. The segment covering 594-603 has biased composition (polar residues); sequence PTTNPHTSAS. Positions 619–628 are enriched in acidic residues; sequence ASEEGSESEG. Residues 798 to 841 adopt a coiled-coil conformation; the sequence is QSEQESLLQQAQAQFRMAQEEARRNRLMRDMAQLRLQLEVSQLE. The 124-residue stretch at 872-995 folds into the PINc domain; that stretch reads RQLATSGRFI…GPMQAALQAA (124 aa).

In terms of assembly, interacts with TERT, PPP2CA and SMG1. Part of a complex that contains SMG1, SMG5, SMG7, PPP2CA, a short isoform of UPF3A (isoform UPF3AS, but not isoform UPF3AL) and phosphorylated UPF1. Not detected in complexes that contain unphosphorylated UPF1. In terms of tissue distribution, ubiquitous.

The protein localises to the cytoplasm. The protein resides in the nucleus. Plays a role in nonsense-mediated mRNA decay. Does not have RNase activity by itself. Promotes dephosphorylation of UPF1. Together with SMG7 is thought to provide a link to the mRNA degradation machinery involving exonucleolytic pathways, and to serve as an adapter for UPF1 to protein phosphatase 2A (PP2A), thereby triggering UPF1 dephosphorylation. Necessary for TERT activity. The sequence is that of Nonsense-mediated mRNA decay factor SMG5 from Homo sapiens (Human).